A 182-amino-acid chain; its full sequence is Acireductone dioxygenase (182 aa).

Fe(2+)-binding residues include histidine 100, histidine 102, glutamate 106, and histidine 145. Residues histidine 100, histidine 102, glutamate 106, and histidine 145 each coordinate Ni(2+).

Belongs to the acireductone dioxygenase (ARD) family. As to quaternary structure, monomer. Fe(2+) is required as a cofactor. Requires Ni(2+) as cofactor.

It catalyses the reaction 1,2-dihydroxy-5-(methylsulfanyl)pent-1-en-3-one + O2 = 3-(methylsulfanyl)propanoate + CO + formate + 2 H(+). The enzyme catalyses 1,2-dihydroxy-5-(methylsulfanyl)pent-1-en-3-one + O2 = 4-methylsulfanyl-2-oxobutanoate + formate + 2 H(+). It participates in amino-acid biosynthesis; L-methionine biosynthesis via salvage pathway; L-methionine from S-methyl-5-thio-alpha-D-ribose 1-phosphate: step 5/6. Its function is as follows. Catalyzes 2 different reactions between oxygen and the acireductone 1,2-dihydroxy-3-keto-5-methylthiopentene (DHK-MTPene) depending upon the metal bound in the active site. Fe-containing acireductone dioxygenase (Fe-ARD) produces formate and 2-keto-4-methylthiobutyrate (KMTB), the alpha-ketoacid precursor of methionine in the methionine recycle pathway. Ni-containing acireductone dioxygenase (Ni-ARD) produces methylthiopropionate, carbon monoxide and formate, and does not lie on the methionine recycle pathway. The protein is Acireductone dioxygenase of Trichormus variabilis (strain ATCC 29413 / PCC 7937) (Anabaena variabilis).